A 335-amino-acid chain; its full sequence is Tetraacyldisaccharide 4'-kinase (335 aa).

58 to 65 (TVGGSGKT) is a binding site for ATP.

This sequence belongs to the LpxK family.

It catalyses the reaction a lipid A disaccharide + ATP = a lipid IVA + ADP + H(+). It participates in glycolipid biosynthesis; lipid IV(A) biosynthesis; lipid IV(A) from (3R)-3-hydroxytetradecanoyl-[acyl-carrier-protein] and UDP-N-acetyl-alpha-D-glucosamine: step 6/6. Its function is as follows. Transfers the gamma-phosphate of ATP to the 4'-position of a tetraacyldisaccharide 1-phosphate intermediate (termed DS-1-P) to form tetraacyldisaccharide 1,4'-bis-phosphate (lipid IVA). The polypeptide is Tetraacyldisaccharide 4'-kinase (Shewanella sp. (strain MR-4)).